The sequence spans 743 residues: MKIGSPSSPILSVVSSSGSLDPKISGSLGSRILPATQRSSPSENLLLHRKMSSNSLRHVESMSQLPSGAGKISQLNAVVLGESLASEENDLVFPSKEFSGQALVSSPQQYMEMHKRSMDDPAAFWSDIASEFYWKQKWGDQVFSENLDVRKGPISIEWFKGGITNICYNCLDKNVEAGLGDKTAIHWEGNELGVDASLTYSELLQRVCQLANYLKDNGVKKGDAVVIYLPMLMELPIAMLACARIGAVHSVVFAGFSADSLAQRIVDCKPNVILTCNAVKRGPKTINLKAIVDAALDQSSKDGVSVGICLTYDNSLATTRENTKWQNGRDVWWQDVISQYPTSCEVEWVDAEDPLFLLYTSGSTGKPKGVLHTTGGYMIYTATTFKYAFDYKSTDVYWCTADCGWITGHSYVTYGPMLNGATVVVFEGAPNYPDPGRCWDIVDKYKVSIFYTAPTLVRSLMRDDDKFVTRHSRKSLRVLGSVGEPINPSAWRWFFNVVGDSRCPISDTWWQTETGGFMITPLPGAWPQKPGSATFPFFGVQPVIVDEKGNEIEGECSGYLCVKGSWPGAFRTLFGDHERYETTYFKPFAGYYFSGDGCSRDKDGYYWLTGRVDDVINVSGHRIGTAEVESALVLHPQCAEAAVVGIEHEVKGQGIYAFVTLLEGVPYSEELRKSLVLMVRNQIGAFAAPDRIHWAPGLPKTRSGKIMRRILRKIASRQLEELGDTSTLADPSVVDQLIALADV.

Residues 1-84 (MKIGSPSSPI…LNAVVLGESL (84 aa)) constitute a chloroplast transit peptide. Residue Asp613 is part of the active site.

It belongs to the ATP-dependent AMP-binding enzyme family. As to expression, expressed in leaves, flower buds and young flowers.

Its subcellular location is the plastid. It is found in the chloroplast. It localises to the glyoxysome. It carries out the reaction acetate + ATP + CoA = acetyl-CoA + AMP + diphosphate. Functionally, catalyzes the production of acetyl-CoA, an activated form of acetate that can be used for lipid synthesis or for energy generation. May play a limited role in the biosynthesis of lipids. This is Acetyl-coenzyme A synthetase, chloroplastic/glyoxysomal (ACS) from Arabidopsis thaliana (Mouse-ear cress).